Consider the following 266-residue polypeptide: Serine/arginine-rich splicing factor 12 (266 aa).

Residues 42–266 (ARPRRPRAPR…SRSYHHKNSW (225 aa)) form a disordered region. Residues 43 to 62 (RPRRPRAPRPRLRLRGRPGR) are compositionally biased toward basic residues. The segment covering 102–114 (KSKERHLCSPSDH) has biased composition (basic and acidic residues). Over residues 115–127 (RRSRSPSQRRSRS) the composition is skewed to basic residues. A compositionally biased stretch (basic and acidic residues) spans 133 to 144 (GRDRRHSDSLKE). Low complexity predominate over residues 151 to 166 (SYSQSKSRSKSLPRQS). Residues 183-194 (GRSRSKSLPKRS) are compositionally biased toward basic residues. Composition is skewed to polar residues over residues 202-212 (SRSPQKQTGSG) and 235-244 (AYTSSGSKTQ). A compositionally biased stretch (basic residues) spans 245–266 (TTKHSHLRSHSRSRSYHHKNSW).

Belongs to the splicing factor SR family.

It is found in the nucleus. In terms of biological role, splicing factor that seems to antagonize SR proteins in pre-mRNA splicing regulation. The chain is Serine/arginine-rich splicing factor 12 (Srsf12) from Mus musculus (Mouse).